A 562-amino-acid chain; its full sequence is Urocanate hydratase (562 aa).

NAD(+)-binding positions include 52 to 53 (GG), glutamine 130, 176 to 178 (GMG), glutamate 196, arginine 201, 242 to 243 (NA), 263 to 267 (QTSAH), 273 to 274 (YL), and tyrosine 322. Residue cysteine 410 is part of the active site. An NAD(+)-binding site is contributed by glycine 492.

Belongs to the urocanase family. The cofactor is NAD(+).

It localises to the cytoplasm. The enzyme catalyses 4-imidazolone-5-propanoate = trans-urocanate + H2O. The protein operates within amino-acid degradation; L-histidine degradation into L-glutamate; N-formimidoyl-L-glutamate from L-histidine: step 2/3. Catalyzes the conversion of urocanate to 4-imidazolone-5-propionate. This is Urocanate hydratase from Klebsiella pneumoniae subsp. pneumoniae (strain ATCC 700721 / MGH 78578).